A 91-amino-acid chain; its full sequence is Cell division protein FtsB (91 aa).

Over 1–3 the chain is Cytoplasmic; it reads MRW. Residues 4–21 traverse the membrane as a helical segment; the sequence is PLIVLAVLVIVLQYPLWL. Residues 22-91 are Periplasmic-facing; it reads GKGGWLRVWD…EIFVHTPRKP (70 aa). A coiled-coil region spans residues 28 to 74; that stretch reads RVWDVDRQLQAQRETNQRLEQRNAGLEAEVRDLKSGNEAVEERARFE.

Belongs to the FtsB family. Part of a complex composed of FtsB, FtsL and FtsQ.

It is found in the cell inner membrane. In terms of biological role, essential cell division protein. May link together the upstream cell division proteins, which are predominantly cytoplasmic, with the downstream cell division proteins, which are predominantly periplasmic. This is Cell division protein FtsB from Aromatoleum aromaticum (strain DSM 19018 / LMG 30748 / EbN1) (Azoarcus sp. (strain EbN1)).